A 695-amino-acid chain; its full sequence is Glycine--tRNA ligase beta subunit (695 aa).

Belongs to the class-II aminoacyl-tRNA synthetase family. Tetramer of two alpha and two beta subunits.

It localises to the cytoplasm. It catalyses the reaction tRNA(Gly) + glycine + ATP = glycyl-tRNA(Gly) + AMP + diphosphate. The polypeptide is Glycine--tRNA ligase beta subunit (Desulforamulus reducens (strain ATCC BAA-1160 / DSM 100696 / MI-1) (Desulfotomaculum reducens)).